The primary structure comprises 242 residues: ADP-dependent L-serine kinase SerK (242 aa).

Glutamate 30 is a catalytic residue. Residues serine 43, isoleucine 49, tryptophan 51, and lysine 52 each coordinate ADP. Valine 68 provides a ligand contact to O-phospho-L-serine. ADP-binding residues include aspartate 69, glycine 70, histidine 71, histidine 72, and arginine 73. Residue aspartate 69 coordinates Mg(2+). 3 residues coordinate O-phospho-L-serine: glycine 70, histidine 71, and histidine 72. Tryptophan 102, lysine 221, threonine 223, and histidine 225 together coordinate O-phospho-L-serine.

This sequence belongs to the SerK family. It depends on Mg(2+) as a cofactor.

The enzyme catalyses L-serine + ADP = O-phospho-L-serine + AMP + H(+). The protein operates within amino-acid biosynthesis; L-cysteine biosynthesis; L-cysteine from L-serine: step 1/2. Functionally, free serine kinase that uses ADP to phosphorylate L-serine to yield O-phospho-L-serine and AMP. The polypeptide is ADP-dependent L-serine kinase SerK (Thermococcus kodakarensis (strain ATCC BAA-918 / JCM 12380 / KOD1) (Pyrococcus kodakaraensis (strain KOD1))).